The sequence spans 66 residues: Large ribosomal subunit protein bL31 (66 aa).

Zn(2+) is bound by residues cysteine 16, cysteine 18, cysteine 36, and cysteine 39.

It belongs to the bacterial ribosomal protein bL31 family. Type A subfamily. As to quaternary structure, part of the 50S ribosomal subunit. It depends on Zn(2+) as a cofactor.

Its function is as follows. Binds the 23S rRNA. This chain is Large ribosomal subunit protein bL31, found in Campylobacter curvus (strain 525.92).